The following is a 302-amino-acid chain: Decaprenyl-phosphate phosphoribosyltransferase (302 aa).

K28 is a binding site for 5-phospho-alpha-D-ribose 1-diphosphate. 2 helical membrane-spanning segments follow: residues 30 to 50 and 55 to 75; these read VLVL…DYVE and VSMA…VNDV. Y70 lines the 5-phospho-alpha-D-ribose 1-diphosphate pocket. The Mg(2+) site is built by N73 and D77. 5-phospho-alpha-D-ribose 1-diphosphate is bound at residue K87. A run of 2 helical transmembrane segments spans residues 100–120 and 122–142; these read WLAY…AWML and PNLA…CFGL. K143 and R160 together coordinate 5-phospho-alpha-D-ribose 1-diphosphate. Transmembrane regions (helical) follow at residues 146–166 and 170–190; these read AVVE…AGGV and IPLS…MVAG. Residue K191 coordinates trans,octa-cis-decaprenyl phosphate. 3 helical membrane-spanning segments follow: residues 218–238, 244–264, and 282–302; these read LRFV…LWAF, SGSW…RYAV, and RVLQ…VAFG.

The protein belongs to the UbiA prenyltransferase family. DPPR synthase subfamily. As to quaternary structure, homotrimer. Mg(2+) is required as a cofactor.

It is found in the cell inner membrane. The enzyme catalyses trans,octa-cis-decaprenyl phosphate + 5-phospho-alpha-D-ribose 1-diphosphate + H(+) = trans,octa-cis-decaprenylphospho-beta-D-ribofuranose 5-phosphate + diphosphate. It functions in the pathway cell wall biogenesis; cell wall polysaccharide biosynthesis. Its function is as follows. Involved in the biosynthesis of decaprenylphosphoryl arabinose (DPA) a precursor for arabinan synthesis in mycobacterial cell wall biosynthesis. Catalyzes the transfer of a 5-phosphoribosyl residue from phosphoribose diphosphate (PRPP) to decaprenyl phosphate (DP) to form decaprenylphosphoryl-5-phosphoribose (DPPR). This Mycobacterium tuberculosis (strain CDC 1551 / Oshkosh) protein is Decaprenyl-phosphate phosphoribosyltransferase.